The primary structure comprises 476 residues: E3 SUMO-protein ligase EGR2 (476 aa).

A compositionally biased stretch (low complexity) spans 127 to 141 (PASTTASSSVTSASP). The interval 127 to 178 (PASTTASSSVTSASPNPLATGPLGVCTMSQTQPDLDHLYSPPPPPPPYSGCA) is disordered. The HCFC1-binding-motif (HBM) signature appears at 162–165 (DHLY). Lys247 is subject to N6-acetyllysine; by EP300. 2 disordered regions span residues 275–300 (GPSA…SSSA) and 318–341 (RPIL…RPYP). Residues 281–290 (TGPGASGGSE) are compositionally biased toward gly residues. 3 consecutive C2H2-type zinc fingers follow at residues 340–364 (YPCP…IRIH), 370–392 (FQCR…IRTH), and 398–420 (FACD…TKIH). The interval 412–476 (ERKRHTKIHL…APCSSRTRTP (65 aa)) is disordered. The segment covering 415–425 (RHTKIHLRQKE) has biased composition (basic residues). Over residues 429 to 476 (SAPSASVPAPSTASCSGGVQPGGTLCSSNSSSLGGGPLAPCSSRTRTP) the composition is skewed to low complexity.

It belongs to the EGR C2H2-type zinc-finger protein family. As to quaternary structure, interacts with HCFC1. Interacts with WWP2. Interacts with UBC9. Interacts with CITED1. Interacts (via phosphorylated form) with SFN. Ubiquitinated by WWP2 leading to proteasomal degradation. Post-translationally, acetylated at Lys-247. May be deacetylated by HDAC6, HDAC10 or SIRT1.

Its subcellular location is the nucleus. The protein operates within protein modification; protein sumoylation. In terms of biological role, sequence-specific DNA-binding transcription factor. Plays a role in hindbrain segmentation by regulating the expression of a subset of homeobox containing genes and in Schwann cell myelination by regulating the expression of genes involved in the formation and maintenance of myelin. Binds to two EGR2-consensus sites EGR2A (5'-CTGTAGGAG-3') and EGR2B (5'-ATGTAGGTG-3') in the HOXB3 enhancer and promotes HOXB3 transcriptional activation. Binds to specific DNA sites located in the promoter region of HOXA4, HOXB2 and ERBB2. Regulates hindbrain segmentation by controlling the expression of Hox genes, such as HOXA4, HOXB3 and HOXB2, and thereby specifying odd and even rhombomeres. Promotes the expression of HOXB3 in the rhombomere r5 in the hindbrain. Regulates myelination in the peripheral nervous system after birth, possibly by regulating the expression of myelin proteins, such as MPZ, and by promoting the differentiation of Schwann cells. Involved in the development of the jaw openener musculature, probably by playing a role in its innervation through trigeminal motor neurons. May play a role in adipogenesis, possibly by regulating the expression of CEBPB. Its function is as follows. E3 SUMO-protein ligase helping SUMO1 conjugation to its coregulators NAB1 and NAB2, whose sumoylation down-regulates EGR2 transcriptional activity. This Homo sapiens (Human) protein is E3 SUMO-protein ligase EGR2 (EGR2).